We begin with the raw amino-acid sequence, 983 residues long: Inner tegument protein (983 aa).

The segment at 474–983 (LNVNTHFAVQ…TSVSLPPASP (510 aa)) is interaction with large tegument protein. A disordered region spans residues 902–932 (PWESAPQPPRLRMTPDTDHEESTAGATSVPE). Residues 914–923 (MTPDTDHEES) show a composition bias toward basic and acidic residues.

Belongs to the herpesviridae inner tegument protein family. Interacts (via C-terminus) with the large tegument protein/LTP (via N-terminus).

It is found in the virion tegument. Its subcellular location is the host cytoplasm. The protein localises to the host nucleus. It localises to the host Golgi apparatus. The protein resides in the host trans-Golgi network. Functionally, plays an essential role in cytoplasmic secondary envelopment during viral egress. Interacts with the capsid via the large tegument protein/LTP and participates in its transport to the host trans-Golgi network (TGN) where secondary envelopment occurs. Modulates tegumentation and capsid accumulation at the viral assembly complex. The polypeptide is Inner tegument protein (UL47) (Homo sapiens (Human)).